We begin with the raw amino-acid sequence, 1018 residues long: Fibronectin-binding protein A (1018 aa).

The signal sequence occupies residues 1–36; sequence MKNNLRYGIRKHKLGAASVFLGTMIVVGMGQDKEAA. A YSIRK-G/S signaling motif motif is present at residues 7 to 18; that stretch reads YGIRKHKLGAAS. Residues 37-511 form a ligand-binding A region region; that stretch reads ASEQKTTTVE…SNKANGNGKN (475 aa). 2 disordered regions span residues 38-61 and 78-195; these read SEQK…SETQ and ATVT…ETGT. Composition is skewed to polar residues over residues 39–61 and 78–92; these read EQKT…SETQ and ATVT…QVTT. The segment covering 112–126 has biased composition (basic and acidic residues); that stretch reads TVKEEVVKEEAKPQV. Residues 129–139 show a composition bias toward polar residues; it reads TTQSQDNSGDQ. The segment at 194–511 is fibrinogen/elastin/tropoelastin-binding; it reads GTDVTSKVTV…SNKANGNGKN (318 aa). The fibronectin-binding stretch occupies residues 512–872; it reads GPIIQNNKFE…EGQQTIEEDT (361 aa). A B-1 repeat occupies 545–574; it reads EEYDSSTLDIDYHTAIDGGGGYVDGYIETI. The 2 X approximate tandem repeats stretch occupies residues 545–604; sequence EEYDSSTLDIDYHTAIDGGGGYVDGYIETIEETDSSAIDIDYHTAVDSEAGHVGGYTESS. The stretch at 575-604 is one B-2 repeat; that stretch reads EETDSSAIDIDYHTAVDSEAGHVGGYTESS. Disordered stretches follow at residues 595-622, 740-813, and 827-997; these read GHVG…NSKH, LGYE…DIDF, and EIIE…GMLF. The D-1 repeat unit spans residues 745 to 782; the sequence is GQNSGNQSFEEDTEEDKPKYEQGGNIVDIDFDSVPQIH. The interval 745–878 is 4 X approximate tandem repeats; that stretch reads GQNSGNQSFE…EEDTTPPIVP (134 aa). The D-2 repeat unit spans residues 783-820; sequence GQNKGNQSFEEDTEKDKPKYEHGGNIIDIDFDSVPHIH. One copy of the D-3 repeat lies at 821 to 859; it reads GFNKHTEIIEEDTNKDKPSYQFGGHNSVDFEEDTLPKVS. The segment covering 827–838 has biased composition (basic and acidic residues); that stretch reads EIIEEDTNKDKP. The D-4; truncated repeat unit spans residues 860 to 878; it reads GQNEGQQTIEEDTTPPIVP. The span at 875–938 shows a compositional bias: pro residues; that stretch reads PIVPPTPPTP…PAEPGKPVPP (64 aa). 5 WR repeats span residues 879 to 892, 893 to 906, 907 to 920, 921 to 934, and 935 to 948; these read PTPP…EPET, PTPP…EPGK, and PVPP…KPSK. Residues 879–948 form a 5 X tandem repeats, Pro-rich (WR) region; that stretch reads PTPPTPEVPS…AKEEPKKPSK (70 aa). The LPXTG sorting signal signature appears at 982-986; sequence LPETG. Pentaglycyl murein peptidoglycan amidated threonine is present on threonine 985. Positions 986–1018 are cleaved as a propeptide — removed by sortase; the sequence is GGEESTNKGMLFGGLFSILGLALLRRNKKNHKA.

The protein resides in the secreted. It localises to the cell wall. In terms of biological role, promotes bacterial attachment to multiple substrates, such as fibronectin (Fn), fibrinogen (Fg), elastin peptides and tropoelastin. This confers to S.aureus the ability to invade endothelial cells. Promotes adherence to and aggregation of activated platelets. This chain is Fibronectin-binding protein A, found in Staphylococcus aureus (strain USA300).